The primary structure comprises 471 residues: Siroheme synthase 1 (471 aa).

Positions 1 to 203 are precorrin-2 dehydrogenase /sirohydrochlorin ferrochelatase; sequence MEYLPLFAQL…GDTRAAEAVL (203 aa). NAD(+)-binding positions include 22-23 and 43-44; these read EV and KK. The residue at position 128 (serine 128) is a Phosphoserine. Residues 215–471 form a uroporphyrinogen-III C-methyltransferase region; that stretch reads GEIILVGAGP…NLRSSVVNLA (257 aa). An S-adenosyl-L-methionine-binding site is contributed by proline 224. Aspartate 247 functions as the Proton acceptor in the catalytic mechanism. The Proton donor role is filled by lysine 269. Residues 300–302, isoleucine 305, 330–331, methionine 382, and glycine 411 contribute to the S-adenosyl-L-methionine site; these read GGD and TA.

It in the N-terminal section; belongs to the precorrin-2 dehydrogenase / sirohydrochlorin ferrochelatase family. The protein in the C-terminal section; belongs to the precorrin methyltransferase family.

The catalysed reaction is uroporphyrinogen III + 2 S-adenosyl-L-methionine = precorrin-2 + 2 S-adenosyl-L-homocysteine + H(+). It catalyses the reaction precorrin-2 + NAD(+) = sirohydrochlorin + NADH + 2 H(+). It carries out the reaction siroheme + 2 H(+) = sirohydrochlorin + Fe(2+). It functions in the pathway cofactor biosynthesis; adenosylcobalamin biosynthesis; precorrin-2 from uroporphyrinogen III: step 1/1. It participates in cofactor biosynthesis; adenosylcobalamin biosynthesis; sirohydrochlorin from precorrin-2: step 1/1. The protein operates within porphyrin-containing compound metabolism; siroheme biosynthesis; precorrin-2 from uroporphyrinogen III: step 1/1. Its pathway is porphyrin-containing compound metabolism; siroheme biosynthesis; siroheme from sirohydrochlorin: step 1/1. It functions in the pathway porphyrin-containing compound metabolism; siroheme biosynthesis; sirohydrochlorin from precorrin-2: step 1/1. Functionally, multifunctional enzyme that catalyzes the SAM-dependent methylations of uroporphyrinogen III at position C-2 and C-7 to form precorrin-2 via precorrin-1. Then it catalyzes the NAD-dependent ring dehydrogenation of precorrin-2 to yield sirohydrochlorin. Finally, it catalyzes the ferrochelation of sirohydrochlorin to yield siroheme. This Cronobacter sakazakii (strain ATCC BAA-894) (Enterobacter sakazakii) protein is Siroheme synthase 1.